We begin with the raw amino-acid sequence, 957 residues long: Glycine dehydrogenase (decarboxylating) (957 aa).

At Lys702 the chain carries N6-(pyridoxal phosphate)lysine.

Belongs to the GcvP family. The glycine cleavage system is composed of four proteins: P, T, L and H. Pyridoxal 5'-phosphate is required as a cofactor.

The enzyme catalyses N(6)-[(R)-lipoyl]-L-lysyl-[glycine-cleavage complex H protein] + glycine + H(+) = N(6)-[(R)-S(8)-aminomethyldihydrolipoyl]-L-lysyl-[glycine-cleavage complex H protein] + CO2. In terms of biological role, the glycine cleavage system catalyzes the degradation of glycine. The P protein binds the alpha-amino group of glycine through its pyridoxal phosphate cofactor; CO(2) is released and the remaining methylamine moiety is then transferred to the lipoamide cofactor of the H protein. The protein is Glycine dehydrogenase (decarboxylating) of Synechococcus sp. (strain RCC307).